The following is a 524-amino-acid chain: tRNA-2-methylthio-N(6)-dimethylallyladenosine synthase (524 aa).

A compositionally biased stretch (basic and acidic residues) spans 1–12 (MNTHPSHPDHPA). Residues 1-23 (MNTHPSHPDHPADTLPARGNREG) form a disordered region. The region spanning 27–143 (RTYEVRTFGC…LPTLLNRAEH (117 aa)) is the MTTase N-terminal domain. Positions 36, 72, 106, 180, 184, and 187 each coordinate [4Fe-4S] cluster. The 237-residue stretch at 166-402 (RESAYAGWVS…MALQERICEE (237 aa)) folds into the Radical SAM core domain. In terms of domain architecture, TRAM spans 405 to 476 (QKFIGQTVEL…PFFLIADAGV (72 aa)).

This sequence belongs to the methylthiotransferase family. MiaB subfamily. In terms of assembly, monomer. [4Fe-4S] cluster is required as a cofactor.

The protein resides in the cytoplasm. It carries out the reaction N(6)-dimethylallyladenosine(37) in tRNA + (sulfur carrier)-SH + AH2 + 2 S-adenosyl-L-methionine = 2-methylsulfanyl-N(6)-dimethylallyladenosine(37) in tRNA + (sulfur carrier)-H + 5'-deoxyadenosine + L-methionine + A + S-adenosyl-L-homocysteine + 2 H(+). Its function is as follows. Catalyzes the methylthiolation of N6-(dimethylallyl)adenosine (i(6)A), leading to the formation of 2-methylthio-N6-(dimethylallyl)adenosine (ms(2)i(6)A) at position 37 in tRNAs that read codons beginning with uridine. The protein is tRNA-2-methylthio-N(6)-dimethylallyladenosine synthase of Corynebacterium efficiens (strain DSM 44549 / YS-314 / AJ 12310 / JCM 11189 / NBRC 100395).